The primary structure comprises 394 residues: THAP domain-containing protein 5 (394 aa).

Residues 1-84 (MPRYCAAICC…LKQTAIPTIF (84 aa)) form a THAP-type zinc finger. Residues 86–109 (LPEDNQEKDPSKKKSQKKKLKSEK) form a disordered region. Residues 320-323 (EHSY) carry the HCFC1-binding motif (HBM) motif. Positions 347 to 381 (LELQEQQTLGRLKSLEALIRQLKQENWLSEENVKI) form a coiled coil.

As to quaternary structure, interacts with HTRA2; under apoptotic conditions. Interacts with ABRAXAS2. In terms of processing, cleaved by HTRA2 during apoptosis.

It is found in the nucleus. Has sequence-specific DNA-binding activity and can function as transcriptional repressor (in vitro). May be a regulator of cell cycle: THAP5 overexpression in human cell lines causes cell cycle arrest at G2/M phase. The sequence is that of THAP domain-containing protein 5 (THAP5) from Bos taurus (Bovine).